Reading from the N-terminus, the 2876-residue chain is MNGDMPHVPITTLAGIASLTDLLNQLPLPSPLPATTTKSLLYNGRIAEEVSCLLSRRDDALVSQLAHSLNQVSTEHIELKDNLGSDDPEGDVPLLLQTVLSRNPNVFREKSLMQQPMIPSYKMPQNSMHGSPASNYQQTTITPSPPSRYVQTQAGSGSRYMPQQNSPVPSPYAPQSPAGYMQYSHPPSYPQHQPIQQVSVSSPIVPSGMRNIHDNKVSGQVSGNSNHNARHCSSDEYINIVQRLGNDEGDPAMRNTSFPVRSACSPAGSEGTPKVGPRPPLILQSPPPYTSPSDTAPDLLLDSPERKKKQKRLLKEEGGKGAMYGIVSSPSKDSTKLTIKLSRVKSSETEQSAEPVVPVVDHGSDAENEVSCNSLSYHRNPQERLSAGQCLSGEQSAYQQVPVLQNIGALAAKQPGVVSGTPYDEAELDALAEIERIERESAIERERCSKEVQDKDKPLKKRKQDSYPQEPGAAGTAGASGTPGVGGGCNAGNKLVPQEACAASNGSSRPALMVSIDLQQAGRVEGPVDSCPVPATEAQRWTEDGSESTGVLRLKSKTDGEVQRTVDGRPEVIKQRVETTPQKTAVDGRPETPINKHENRREISNKVSSEKRSDLSKHRHDGKAEKIRAEGKGHETSRKHEGRSELSRDCKEERHREKDSDSSKGRRSDTSKSSRVEHNRDKEQEQEKVGDKGLEKGREKELEKGRDKERVKDQEKDQEKGRDKEVEKGRYKERVKDRVKEQEKVRDKEQVKGRDKKRSKDLEKCREKDQDKELEKDREKNQDKELEKGREKDQDKELEKGREKDRDKEMEKAREKDQDKELEKGREKDQDKELEKGQEKDRDKVREKDRDKVRDKDRDKVREKDRDKVREKDRDKLREKDREKIRERDRDKGREKDRDKEQVKTREKDQEKERLKDRDKEREKVRDKGRDRDRDQEKKRNKELTEDKQAPEQRSRPNSPRVKQEPRNGEESKIKPERSVHKNSNNKDEKRGGENKNQLDGHKPQSIDSKTADFPNYLLGGKSSALKNFVIPKLKRDKEGNVMQEVRIELFSEPRVKLEKLDLVEDLNKGAKPVVVLKKLSIDEVQKMISNSRSSKSSRSSHGRFRETDSRLPLCERVKMNKRRRSSTNEKPKYAEVSSDDDSSSSVEIAPKRSKKDRDKTWEYEEKDRRGSGDHRRSFDSRRSSGGRHRERSPEDSDEDSPPPSLSDLARKLKKKEKQKKRKAYEPKLTVDEMMDSSTFKRFTTSVDNILDNLEDVDLTSLDDDEIPQELLLGKHQLSELSSESAKIKAMGIMHKITHDKMVKVQSILEKNIQDGAKLSTLMNHDNDRDDEERLWRDLIMERVTKSADACLTALNIMTSARMPKAVYIEDVIERVVQYTKFHLQNTLYPQYDPVYRVDHHGGGTLSSKAKRAKCSTHKQRVTVMLYNKVCDIISNLSELLEIQLLTDTTILQISSLGITPFFVENVSELQLCAIKLVTAVFSRYEKHRQLILEEIFTSLARLPTSKRNLRNYRLNSSDVDGEPMYIQMVTALVLQLIQCVVNLPSDKDSDEENDRKVDHDVLITNSYETAMRTAQNFLSVFLKKCGSKQGEDDYRPLFENFVQDLLSTVNKPDWPAAELLLSLLGRLLVHQFSNKQTEMALRVASLDYLGTVAARLRKDAVTSKMDQRSINRILGENSGSDEIQQLQKALLNYLDENVETDPFLLFARKFYLAQWYRDTSTETEKAMKSQRDDDSSDGPHHAKDVETTSEILQKAEARKKFLRSVIKTTASKFSSLRVNSDTVDYEDSCLIVRYLASMRPFAQSFDIYLTQILRVLGESAIAVRTKAMKCLSEVVAVDPSILARLDMQRGVHGRLMDNSTSVREAAVELLGRFVLSRPQLTEQYYDMLIERILDTGISVRKRVIKILRDICLEQPTFNKVTEMCVKMIRRVNDEEGIKKLVNETFQKLWFTPTPNHDKEAMTRKILNITDVVAACRDSGYDWFEQLLQNLLKSEEDASYKPARKACAQLVDSLVEHILKYEESLADCENKGLTSNRLVACITTLYLFSKIRPHLMVKHAMTMQPYLTTKCNTQSDFMVICNVAKILELVVPLMDHPSESFLTTIEEDLMKLIIKYGMTVVQHCVSCLGAVVNRVTHNYKFVWSCFNRYYGALSKLKMQHQEDPNSTVLVSNKPALLRSLFTVGALCRHFDFDQEEFKGSNKVVIKDKVLELLLYFTKNDDEEVQTKAIIGLGFLFIQDPGLMFVTEVKNLYNTLLADRKTSVNLKIQVLKNLQTYLQEEDSRMQEADREWNKLSKKEDLKEMGDISSGMSSSIMQLYLKQVLEAFFHTQSSVRHYALNVIALTLNQGLIHPVQCVPYLIAMGTDSEPTMRNKADQQLVEIDKKYTGFIHMKAVAGMKMSYQVQQAIVGSKDTVIRGFRLDESSTALCSHLYTMVRGNRQHRRAFLISLLNLFDDNTKSDVNMLLYIADNLASFPYQTQEEPMFIMHHVDITLSVSGSNLLQSFKESLLKEPRKVEVVKKKKKKKKKKKQKQKRGKKYGSEEEDESSRSSSSSSSSSSSSSDSDSSEEEVIHRRKKPRRTTANSDSDSDLDVEDVDKVMLRLPDNPEPLLDFANASQGILLLLMLKQHLKNLYGFSDSKIQKYSPTESAKIYDKAVNRKANVHFNPRQTLDYLTNSLSNSDLSNDVKRRVVRQYLDFKVLMEHLDPDEEEEEGEASASSHARNKAINALLGGSSPKNNAAESYDDDSEVEEKTPGSSRRSRRTGDSAEASGHRNETVEATDVIALCCPKYKDRPQIARVIQKTSKGYSIHWMAGSYSGTWAEAKKRDGRKLVPWVDTIKESDIIYKKIALTSAHKLSNKVVQTLRSLYAAKEGSSS.

Polar residues-rich tracts occupy residues 124 to 142 and 149 to 167; these read PQNS…TTIT and YVQT…QNSP. Disordered regions lie at residues 124 to 197, 246 to 367, 439 to 494, and 525 to 1017; these read PQNS…PIQQ, NDEG…SDAE, RESA…AGNK, and EGPV…FPNY. Over residues 276-290 the composition is skewed to pro residues; the sequence is GPRPPLILQSPPPYT. The span at 439 to 457 shows a compositional bias: basic and acidic residues; it reads RESAIERERCSKEVQDKDK. Residues 471 to 480 are compositionally biased toward low complexity; it reads PGAAGTAGAS. The segment covering 481–490 has biased composition (gly residues); it reads GTPGVGGGCN. Basic and acidic residues-rich tracts occupy residues 556–577, 586–955, and 962–1005; these read SKTD…KQRV, VDGR…EQRS, and VKQE…HKPQ. Residues 1068-1081 carry the PxVxL motif motif; it reads NKGAKPVVVLKKLS. Disordered stretches follow at residues 1088 to 1229 and 1724 to 1747; these read MISN…EPKL and TEKA…KDVE. Over residues 1090–1100 the composition is skewed to low complexity; the sequence is SNSRSSKSSRS. Basic and acidic residues-rich tracts occupy residues 1104–1119 and 1156–1183; these read RFRE…ERVK and KDRD…DSRR. Residues 1212 to 1223 show a composition bias toward basic residues; the sequence is KLKKKEKQKKRK. HEAT repeat units lie at residues 1803-1841, 1879-1917, 1981-2020, 2203-2241, and 2349-2387; these read AQSF…VDPS, PQLT…EQPT, YDWF…HILK, VVIK…QDPG, and LIHP…KYTG. 2 disordered regions span residues 2516–2590 and 2728–2774; these read EVVK…DSDL and ALLG…GHRN. The segment covering 2519–2537 has biased composition (basic residues); it reads KKKKKKKKKKKQKQKRGKK. Residues 2548 to 2563 are compositionally biased toward low complexity; it reads RSSSSSSSSSSSSSDS. Over residues 2762–2774 the composition is skewed to basic and acidic residues; that stretch reads RTGDSAEASGHRN.

This sequence belongs to the SCC2/Nipped-B family.

It localises to the nucleus. Its function is as follows. May play a structural role in chromatin. Involved in sister chromatid cohesion, possibly by facilitating the cohesin complex loading. Transcription factor, which may promote cortical neuron migration during brain development by regulating the transcription of crucial genes in this process. The protein is Nipped-B-like protein B (nipblb) of Danio rerio (Zebrafish).